The following is a 501-amino-acid chain: Beta-secretase 1 (501 aa).

Positions 1-21 (MAPALHWLLLWVGSGMLPAQG) are cleaved as a signal peptide. The propeptide occupies 22–45 (THLGIRLPLRSGLAGPPLGLRLPR). Over 22-457 (THLGIRLPLR…PQTDESTLMT (436 aa)) the chain is Extracellular. A disordered region spans residues 39–58 (LGLRLPRETDEESEEPGRRG). Positions 75-416 (YYVEMTVGSP…DRARKRIGFA (342 aa)) constitute a Peptidase A1 domain. D93 is a catalytic residue. K126 is modified (N6-acetyllysine). N-linked (GlcNAc...) asparagine glycosylation is found at N153, N172, and N223. Disulfide bonds link C216/C420, C278/C443, and C330/C380. An N6-acetyllysine mark is found at K275, K279, and K285. D289 is a catalytic residue. Residues K299, K300, and K307 each carry the N6-acetyllysine modification. The N-linked (GlcNAc...) asparagine glycan is linked to N354. The chain crosses the membrane as a helical span at residues 458-478 (IAYVMAAICALFMLPLCLMVC). 4 S-palmitoyl cysteine lipidation sites follow: C474, C478, C482, and C485. At 479 to 501 (QWRCLRCLRHQHDDFADDISLLK) the chain is on the cytoplasmic side. The tract at residues 479–501 (QWRCLRCLRHQHDDFADDISLLK) is interaction with RTN3. The short motif at 496–500 (DISLL) is the DXXLL element. The residue at position 498 (S498) is a Phosphoserine. Residue K501 forms a Glycyl lysine isopeptide (Lys-Gly) (interchain with G-Cter in ubiquitin) linkage.

It belongs to the peptidase A1 family. In terms of assembly, monomer. Interacts (via DXXLL motif) with GGA1, GGA2 and GGA3 (via their VHS domain); the interaction highly increases when BACE1 is phosphorylated at Ser-498. Interacts with RTN1; RTN2; RTN3 and RTN4; the interaction leads to inhibition of amyloid precursor protein processing. Interacts with SNX6. Interacts with PCSK9. Interacts with NAT8 and NAT8B. Interacts with BIN1. Interacts (via extracellular domain) with ADAM10 (via extracellular domain). Interacts with SORL1; this interaction may affect binding with APP and hence reduce APP cleavage. Interacts with NRDC AND NRG1. Post-translationally, N-Glycosylated. Addition of a bisecting N-acetylglucosamine by MGAT3 blocks lysosomal targeting, further degradation and is required for maintaining stability under stress conditions. In terms of processing, palmitoylation mediates lipid raft localization. Acetylated in the endoplasmic reticulum at Lys-126, Lys-275, Lys-279, Lys-285, Lys-299, Lys-300 and Lys-307. Acetylation by NAT8 and NAT8B is transient and deacetylation probably occurs in the Golgi. Acetylation regulates the maturation, the transport to the plasma membrane, the stability and the expression of the protein. Post-translationally, ubiquitinated at Lys-501, ubiquitination leads to lysosomal degradation. Monoubiquitinated and 'Lys-63'-linked polyubitinated. Deubiquitnated by USP8; inhibits lysosomal degradation. In terms of processing, phosphorylation at Ser-498 is required for interaction with GGA1 and retrograded transport from endosomal compartments to the trans-Golgi network. Non-phosphorylated BACE1 enters a direct recycling route to the cell surface. As to expression, expressed in the brain, specifically in neurons and astrocytes (at protein level).

It localises to the cell membrane. The protein resides in the golgi apparatus. Its subcellular location is the trans-Golgi network. It is found in the endoplasmic reticulum. The protein localises to the endosome. It localises to the late endosome. The protein resides in the early endosome. Its subcellular location is the cell surface. It is found in the cytoplasmic vesicle membrane. The protein localises to the membrane raft. It localises to the lysosome. The protein resides in the recycling endosome. Its subcellular location is the cell projection. It is found in the axon. The protein localises to the dendrite. The enzyme catalyses Broad endopeptidase specificity. Cleaves Glu-Val-Asn-Leu-|-Asp-Ala-Glu-Phe in the Swedish variant of Alzheimer's amyloid precursor protein.. With respect to regulation, inhibited by RTN3 and RTN4. Its function is as follows. Responsible for the proteolytic processing of the amyloid precursor protein (APP). Cleaves at the N-terminus of the A-beta peptide sequence, between residues 671 and 672 of APP, leads to the generation and extracellular release of beta-cleaved soluble APP, and a corresponding cell-associated C-terminal fragment which is later released by gamma-secretase. Cleaves CHL1. The sequence is that of Beta-secretase 1 from Mus musculus (Mouse).